The primary structure comprises 741 residues: Transketolase, chloroplastic (741 aa).

Residues 1–67 constitute a chloroplast transit peptide; it reads MASSSSLTLS…TKQQFSVRAS (67 aa). A substrate-binding site is contributed by histidine 103. Residues histidine 143 and 192–194 each bind thiamine diphosphate; that span reads GPL. Position 233 (aspartate 233) interacts with Mg(2+). 2 residues coordinate thiamine diphosphate: glycine 234 and asparagine 263. Mg(2+)-binding residues include asparagine 263 and isoleucine 265. Positions 340, 434, and 461 each coordinate substrate. Histidine 340 is a binding site for thiamine diphosphate. Residues glutamate 488 and phenylalanine 515 each coordinate thiamine diphosphate. Glutamate 488 (proton donor) is an active-site residue. Residues histidine 539, aspartate 547, and arginine 598 each coordinate substrate.

The protein belongs to the transketolase family. As to quaternary structure, homodimer. It depends on Mg(2+) as a cofactor. Ca(2+) serves as cofactor. Mn(2+) is required as a cofactor. Requires Co(2+) as cofactor. The cofactor is thiamine diphosphate.

The protein localises to the plastid. It is found in the chloroplast thylakoid membrane. It catalyses the reaction D-sedoheptulose 7-phosphate + D-glyceraldehyde 3-phosphate = aldehydo-D-ribose 5-phosphate + D-xylulose 5-phosphate. Its pathway is carbohydrate biosynthesis; Calvin cycle. Its function is as follows. Catalyzes the reversible transfer of a two-carbon ketol group from fructose-6-phosphate or sedoheptulose-7-phosphate to glyceraldehyde-3-phosphate to yield xylulose-5-phosphate and erythrose-4-phosphate or ribose-5-phosphate, respectively. In Solanum tuberosum (Potato), this protein is Transketolase, chloroplastic.